The sequence spans 1236 residues: Chitinase-like protein PB1E7.04c (1236 aa).

A signal peptide spans 1–19 (MRLISSLLLLVYSARLALS). Residues Asn21, Asn24, Asn54, Asn123, Asn225, Asn237, Asn255, Asn267, Asn277, Asn288, and Asn309 are each glycosylated (N-linked (GlcNAc...) asparagine). In terms of domain architecture, GH18 spans 26-325 (TAVLGYWGSN…EAIHKILDTK (300 aa)). 3 disordered regions span residues 326–367 (SKHS…TSSA), 449–497 (VSSI…QSTL), and 584–625 (TSSP…STIL). Residues 339–351 (QGLESTSSIALNP) are compositionally biased toward polar residues. Positions 352–367 (TSSISSTSSSSSTSSA) are enriched in low complexity. Residues Asn715, Asn737, Asn768, Asn786, and Asn813 are each glycosylated (N-linked (GlcNAc...) asparagine). Disordered stretches follow at residues 804–836 (ISTS…LAAN), 868–927 (TTAL…TSSS), 946–979 (TPTS…SSIA), and 1125–1159 (AASG…TPSN). Polar residues predominate over residues 810–821 (NEYNTSFHAPTV). Over residues 822 to 832 (SSTTSSSSTTS) the composition is skewed to low complexity. Positions 1125–1156 (AASGSSTVTSSATASSSSSAATTADSSVTTDT) are enriched in low complexity.

Belongs to the glycosyl hydrolase 18 family. Chitinase class III subfamily.

The protein localises to the secreted. In Schizosaccharomyces pombe (strain 972 / ATCC 24843) (Fission yeast), this protein is Chitinase-like protein PB1E7.04c.